The chain runs to 299 residues: Mitochondrial 2-oxodicarboxylate carrier (299 aa).

Solcar repeat units follow at residues 11-100 (NEAS…YKKL), 107-196 (SPAL…VKNI), and 205-294 (LEFL…TYSW). The next 6 membrane-spanning stretches (helical) occupy residues 17–37 (ILAG…LDVV), 62–82 (MIFR…PILA), 100–120 (LLGY…LGSG), 179–199 (HGVF…IIPV), 211–231 (FGIG…FDVA), and 274–290 (IMRL…VYEY).

It belongs to the mitochondrial carrier (TC 2.A.29) family.

It localises to the mitochondrion inner membrane. It catalyses the reaction 2-oxoadipate(in) + 2-oxoglutarate(out) = 2-oxoadipate(out) + 2-oxoglutarate(in). The enzyme catalyses hexanedioate(in) + 2-oxoglutarate(out) = hexanedioate(out) + 2-oxoglutarate(in). The catalysed reaction is L-2-aminoadipate(in) + 2-oxoglutarate(out) = L-2-aminoadipate(out) + 2-oxoglutarate(in). It carries out the reaction glutarate(in) + 2-oxoglutarate(out) = glutarate(out) + 2-oxoglutarate(in). It catalyses the reaction 2-oxoheptanedioate(in) + 2-oxoglutarate(out) = 2-oxoheptanedioate(out) + 2-oxoglutarate(in). The enzyme catalyses heptanedioate(in) + 2-oxoglutarate(out) = heptanedioate(out) + 2-oxoglutarate(in). The catalysed reaction is citrate(in) + 2-oxoglutarate(out) = citrate(out) + 2-oxoglutarate(in). In terms of biological role, transports dicarboxylates across the inner membranes of mitochondria by a counter-exchange mechanism. Can transport 2-oxoadipate (2-oxohexanedioate), 2-oxoglutarate, adipate (hexanedioate), glutarate, and to a lesser extent, pimelate (heptanedioate), 2-oxopimelate (2-oxoheptanedioate), 2-aminoadipate (2-aminohexanedioate), oxaloacetate, and citrate. Plays a central role in catabolism of lysine, hydroxylysine, and tryptophan, by transporting common metabolite intermediates (such as 2-oxoadipate) into the mitochondria, where it is converted into acetyl-CoA and can enter the citric acid (TCA) cycle. The polypeptide is Mitochondrial 2-oxodicarboxylate carrier (SLC25A21) (Bos taurus (Bovine)).